The chain runs to 157 residues: Phosphopantetheine adenylyltransferase (157 aa).

Ser-9 lines the substrate pocket. ATP is bound by residues 9 to 10 and His-17; that span reads SF. Positions 41, 74, and 88 each coordinate substrate. Residues 89-91, Glu-99, and 123-129 contribute to the ATP site; these read GLR and YTHVSSS.

This sequence belongs to the bacterial CoaD family. Homohexamer. The cofactor is Mg(2+).

It localises to the cytoplasm. It catalyses the reaction (R)-4'-phosphopantetheine + ATP + H(+) = 3'-dephospho-CoA + diphosphate. It functions in the pathway cofactor biosynthesis; coenzyme A biosynthesis; CoA from (R)-pantothenate: step 4/5. Functionally, reversibly transfers an adenylyl group from ATP to 4'-phosphopantetheine, yielding dephospho-CoA (dPCoA) and pyrophosphate. This chain is Phosphopantetheine adenylyltransferase, found in Micrococcus luteus (strain ATCC 4698 / DSM 20030 / JCM 1464 / CCM 169 / CCUG 5858 / IAM 1056 / NBRC 3333 / NCIMB 9278 / NCTC 2665 / VKM Ac-2230) (Micrococcus lysodeikticus).